A 485-amino-acid chain; its full sequence is MEKQVRVRYAPSPTGHLHIGNARTALFNYLFARHQDGKFIIRIEDTDVKRNVAGGEESQLKYLKWLGMDWDEGVDVGGEFGPYRQTERLDIYKKLYEDLLERGLAYKCYMTEEELEAEREGQIARGETPRYAGNHRDLTEAQVKEFEAEGRIPSIRFRVPADRDYTFKDIVKDEVAFHSNDFGDFVIVKKDGIPTYNFAVAVDDHLMEITHVLRGDDHISNTPKQMMIYEAFGWDIPQFGHMTLIVNESRKKLSKRDESIIQFIEQYKELGYLPEAIFNFIALLGWSPVGEEEIFSQEEFIKMFDAARLSKSPALFDSQKLKWMNNQYMKKQDLDTVVELSLPHLVKAGRIGETLSEQEQAWIRDVIALYHEQMSFGAEIVELSEMFFKDHVDYEEEGQEVLKGEQVPEVLRAFAGQVEALEAMEPAAIKAAIKAVQKETGHKGKNLFMPIRVATTGQTHGPELPNAIALLGKEKVLXRLQKVIG.

Positions 11-21 (PSPTGHLHIGN) match the 'HIGH' region motif. A 'KMSKS' region motif is present at residues 252 to 256 (KLSKR). Residue Lys255 coordinates ATP.

The protein belongs to the class-I aminoacyl-tRNA synthetase family. Glutamate--tRNA ligase type 1 subfamily. Monomer.

It localises to the cytoplasm. It carries out the reaction tRNA(Glu) + L-glutamate + ATP = L-glutamyl-tRNA(Glu) + AMP + diphosphate. Catalyzes the attachment of glutamate to tRNA(Glu) in a two-step reaction: glutamate is first activated by ATP to form Glu-AMP and then transferred to the acceptor end of tRNA(Glu). The sequence is that of Glutamate--tRNA ligase from Bacillus cereus (strain ATCC 10987 / NRS 248).